Consider the following 572-residue polypeptide: Proline--tRNA ligase (572 aa).

It belongs to the class-II aminoacyl-tRNA synthetase family. ProS type 1 subfamily. Homodimer.

The protein resides in the cytoplasm. The enzyme catalyses tRNA(Pro) + L-proline + ATP = L-prolyl-tRNA(Pro) + AMP + diphosphate. In terms of biological role, catalyzes the attachment of proline to tRNA(Pro) in a two-step reaction: proline is first activated by ATP to form Pro-AMP and then transferred to the acceptor end of tRNA(Pro). As ProRS can inadvertently accommodate and process non-cognate amino acids such as alanine and cysteine, to avoid such errors it has two additional distinct editing activities against alanine. One activity is designated as 'pretransfer' editing and involves the tRNA(Pro)-independent hydrolysis of activated Ala-AMP. The other activity is designated 'posttransfer' editing and involves deacylation of mischarged Ala-tRNA(Pro). The misacylated Cys-tRNA(Pro) is not edited by ProRS. This Yersinia pseudotuberculosis serotype IB (strain PB1/+) protein is Proline--tRNA ligase.